We begin with the raw amino-acid sequence, 108 residues long: Small ribosomal subunit protein bS16 (108 aa).

Residues 82-108 are disordered; that stretch reads ESKFSKNTQTENKKPVSKKTTKKSKDN. Residues 96–108 show a composition bias toward basic residues; sequence PVSKKTTKKSKDN.

Belongs to the bacterial ribosomal protein bS16 family.

The protein is Small ribosomal subunit protein bS16 of Mycoplasma mycoides subsp. mycoides SC (strain CCUG 32753 / NCTC 10114 / PG1).